Consider the following 876-residue polypeptide: Phosphoenolpyruvate carboxylase (876 aa).

Residues H138 and K543 contribute to the active site.

Belongs to the PEPCase type 1 family. Requires Mg(2+) as cofactor.

It carries out the reaction oxaloacetate + phosphate = phosphoenolpyruvate + hydrogencarbonate. Forms oxaloacetate, a four-carbon dicarboxylic acid source for the tricarboxylic acid cycle. The sequence is that of Phosphoenolpyruvate carboxylase from Aliivibrio salmonicida (strain LFI1238) (Vibrio salmonicida (strain LFI1238)).